Reading from the N-terminus, the 369-residue chain is UDP-N-acetylglucosamine--N-acetylmuramyl-(pentapeptide) pyrophosphoryl-undecaprenol N-acetylglucosamine transferase (369 aa).

UDP-N-acetyl-alpha-D-glucosamine contacts are provided by residues 10-12 (TAG), N124, R161, S195, and Q295.

It belongs to the glycosyltransferase 28 family. MurG subfamily.

The protein resides in the cell membrane. The enzyme catalyses di-trans,octa-cis-undecaprenyl diphospho-N-acetyl-alpha-D-muramoyl-L-alanyl-D-glutamyl-meso-2,6-diaminopimeloyl-D-alanyl-D-alanine + UDP-N-acetyl-alpha-D-glucosamine = di-trans,octa-cis-undecaprenyl diphospho-[N-acetyl-alpha-D-glucosaminyl-(1-&gt;4)]-N-acetyl-alpha-D-muramoyl-L-alanyl-D-glutamyl-meso-2,6-diaminopimeloyl-D-alanyl-D-alanine + UDP + H(+). It participates in cell wall biogenesis; peptidoglycan biosynthesis. Its function is as follows. Cell wall formation. Catalyzes the transfer of a GlcNAc subunit on undecaprenyl-pyrophosphoryl-MurNAc-pentapeptide (lipid intermediate I) to form undecaprenyl-pyrophosphoryl-MurNAc-(pentapeptide)GlcNAc (lipid intermediate II). The protein is UDP-N-acetylglucosamine--N-acetylmuramyl-(pentapeptide) pyrophosphoryl-undecaprenol N-acetylglucosamine transferase of Acidothermus cellulolyticus (strain ATCC 43068 / DSM 8971 / 11B).